Reading from the N-terminus, the 592-residue chain is Putative uric acid sigma-54-dependent transcriptional regulator UacR (592 aa).

Residues 158-229 enclose the PAS domain; sequence ISKIFATMID…HMQHIVSWDD (72 aa). The 231-residue stretch at 272–502 folds into the Sigma-54 factor interaction domain; that stretch reads LVGECRVMRQ…LSNLMEYLVN (231 aa). Residues 300-307 and 364-373 contribute to the ATP site; these read GESGTGKE and ANTGTLFLDE. The segment at residues 567–585 is a DNA-binding region (H-T-H motif); it reads KQVADELGIGIATLYRKIK.

Essential for both formate-dependent and formate-independent uric acid degradation. May be directly involved in the transcription of uacF in response to hypoxanthine, xanthine, and uric acid. This Escherichia coli (strain K12) protein is Putative uric acid sigma-54-dependent transcriptional regulator UacR.